The sequence spans 574 residues: 5'-nucleotidase (574 aa).

Residues 1-26 form the signal peptide; that stretch reads MNPGAARTPALRILALGALLWPAARP. Zn(2+) is bound by residues D36 and H38. C51 and C57 are disulfide-bonded. Residue N53 is glycosylated (N-linked (GlcNAc...) asparagine). 4 residues coordinate Zn(2+): D85, N117, H220, and H243. N-linked (GlcNAc...) asparagine glycans are attached at residues N311 and N333. 2 disulfides stabilise this stretch: C353-C358 and C365-C387. Residue R354 coordinates AMP. Position 354 (R354) interacts with IMP. AMP is bound by residues N390 and R395. IMP is bound by residues N390 and R395. Residue N403 is glycosylated (N-linked (GlcNAc...) asparagine). F417 lines the AMP pocket. F417 is a binding site for IMP. C476 and C479 are oxidised to a cystine. AMP contacts are provided by F500 and D506. Residues F500 and D506 each coordinate IMP. A lipid anchor (GPI-anchor amidated serine) is attached at S549. A propeptide spans 550-574 (removed in mature form); that stretch reads AGSHCCGSFSLIFLSVLAVIIILYQ.

The protein belongs to the 5'-nucleotidase family. In terms of assembly, homodimer. Requires Zn(2+) as cofactor.

The protein localises to the cell membrane. It catalyses the reaction a ribonucleoside 5'-phosphate + H2O = a ribonucleoside + phosphate. The catalysed reaction is a 2'-deoxyribonucleoside 5'-phosphate + H2O = a 2'-deoxyribonucleoside + phosphate. It carries out the reaction dTMP + H2O = thymidine + phosphate. The enzyme catalyses CMP + H2O = cytidine + phosphate. It catalyses the reaction IMP + H2O = inosine + phosphate. The catalysed reaction is AMP + H2O = adenosine + phosphate. It carries out the reaction GMP + H2O = guanosine + phosphate. The enzyme catalyses UMP + H2O = uridine + phosphate. It catalyses the reaction dAMP + H2O = 2'-deoxyadenosine + phosphate. The catalysed reaction is dCMP + H2O = 2'-deoxycytidine + phosphate. In terms of biological role, catalyzes the hydrolysis of nucleotide monophosphates, releasing inorganic phosphate and the corresponding nucleoside, with AMP being the preferred substrate. Shows a preference for ribonucleotide monophosphates over their equivalent deoxyribose forms. Other substrates include IMP, UMP, GMP, CMP, dAMP, dCMP, dTMP, NAD and NMN. The polypeptide is 5'-nucleotidase (NT5E) (Bos taurus (Bovine)).